We begin with the raw amino-acid sequence, 50 residues long: Large ribosomal subunit protein bL33 (50 aa).

The protein belongs to the bacterial ribosomal protein bL33 family.

This Sulfurovum sp. (strain NBC37-1) protein is Large ribosomal subunit protein bL33.